A 231-amino-acid polypeptide reads, in one-letter code: uncharacterized protein (231 aa).

The SWIM-type zinc finger occupies 43 to 76 (YKVKVDLDNNYFGLCTCQYKYNCKHAYALIEAYE).

This is an uncharacterized protein from Methanocaldococcus jannaschii (strain ATCC 43067 / DSM 2661 / JAL-1 / JCM 10045 / NBRC 100440) (Methanococcus jannaschii).